The primary structure comprises 209 residues: Uracil phosphoribosyltransferase (209 aa).

Residues R79, R104, and 131 to 139 contribute to the 5-phospho-alpha-D-ribose 1-diphosphate site; that span reads DPMLATGGS. Residues I194 and 199–201 each bind uracil; that span reads GDA. Residue D200 participates in 5-phospho-alpha-D-ribose 1-diphosphate binding.

The protein belongs to the UPRTase family. Mg(2+) serves as cofactor.

It carries out the reaction UMP + diphosphate = 5-phospho-alpha-D-ribose 1-diphosphate + uracil. It functions in the pathway pyrimidine metabolism; UMP biosynthesis via salvage pathway; UMP from uracil: step 1/1. Allosterically activated by GTP. Its function is as follows. Catalyzes the conversion of uracil and 5-phospho-alpha-D-ribose 1-diphosphate (PRPP) to UMP and diphosphate. The chain is Uracil phosphoribosyltransferase from Streptococcus salivarius.